Reading from the N-terminus, the 343-residue chain is E3 ubiquitin-protein ligase SP1 (343 aa).

A helical transmembrane segment spans residues 1–21 (MIPWGGVTCCLSAAALYLLGR). At 22–222 (SSGRDAEVLE…LISNLGKWSR (201 aa)) the chain is on the chloroplast intermembrane side. The helical transmembrane segment at 223–244 (LYKYASMGFTVLGVFLITKHVI) threads the bilayer. Over 245 to 343 (DSVLERRRRR…IDLAVKTYRH (99 aa)) the chain is Cytoplasmic. An RING-type zinc finger spans residues 296-331 (CVICLEQEYNAVFVPCGHMCCCTACSSHLTSCPLCR).

As to quaternary structure, interacts with TOC33, TOC75-3 and TOC159. In terms of processing, auto-ubiquitinated.

The protein localises to the plastid. Its subcellular location is the chloroplast outer membrane. The enzyme catalyses S-ubiquitinyl-[E2 ubiquitin-conjugating enzyme]-L-cysteine + [acceptor protein]-L-lysine = [E2 ubiquitin-conjugating enzyme]-L-cysteine + N(6)-ubiquitinyl-[acceptor protein]-L-lysine.. The protein operates within protein modification; protein ubiquitination. Functionally, E3 ubiquitin-protein ligase involved in the regulation of protein import in the chloroplast. Associates with TOC complexes and mediates ubiquitination of TOC components, promoting their degradation via the ubiquitin-proteasome system (UPS). Plays a role in the reorganization of the TOC machinery. Involved in a mechanism that regulates plastid biogenesis via UPS. Promotes stress tolerance by depleting the chloroplast protein import apparatus, which limits photosystem assembly and the potential for reactive oxygen species (ROS) formation. May act as negative regulator of programmed cell death (PCD) during biotic stress. This is E3 ubiquitin-protein ligase SP1 from Arabidopsis thaliana (Mouse-ear cress).